We begin with the raw amino-acid sequence, 693 residues long: Elongation factor G (693 aa).

The tr-type G domain occupies 9–283 (ERVRNIGIIA…AVCDYLPSPV (275 aa)). Residues 18–25 (AHIDAGKT), 82–86 (DTPGH), and 136–139 (NKMD) contribute to the GTP site.

This sequence belongs to the TRAFAC class translation factor GTPase superfamily. Classic translation factor GTPase family. EF-G/EF-2 subfamily.

Its subcellular location is the cytoplasm. In terms of biological role, catalyzes the GTP-dependent ribosomal translocation step during translation elongation. During this step, the ribosome changes from the pre-translocational (PRE) to the post-translocational (POST) state as the newly formed A-site-bound peptidyl-tRNA and P-site-bound deacylated tRNA move to the P and E sites, respectively. Catalyzes the coordinated movement of the two tRNA molecules, the mRNA and conformational changes in the ribosome. The polypeptide is Elongation factor G (Dehalococcoides mccartyi (strain ATCC BAA-2266 / KCTC 15142 / 195) (Dehalococcoides ethenogenes (strain 195))).